The following is a 494-amino-acid chain: Glutamyl-tRNA(Gln) amidotransferase subunit A, mitochondrial (494 aa).

Catalysis depends on charge relay system residues K79 and S160. The active-site Acyl-ester intermediate is the S184.

This sequence belongs to the amidase family. GatA subfamily. Subunit of the heterotrimeric GatCAB amidotransferase (AdT) complex, composed of A, B and C subunits.

It localises to the mitochondrion. It carries out the reaction L-glutamyl-tRNA(Gln) + L-glutamine + ATP + H2O = L-glutaminyl-tRNA(Gln) + L-glutamate + ADP + phosphate + H(+). Functionally, allows the formation of correctly charged Gln-tRNA(Gln) through the transamidation of misacylated Glu-tRNA(Gln) in the mitochondria. The reaction takes place in the presence of glutamine and ATP through an activated gamma-phospho-Glu-tRNA(Gln). This chain is Glutamyl-tRNA(Gln) amidotransferase subunit A, mitochondrial, found in Aedes aegypti (Yellowfever mosquito).